Consider the following 571-residue polypeptide: Cationic amino acid transporter 8 (571 aa).

A glycan (N-linked (GlcNAc...) asparagine) is linked at asparagine 35. A run of 6 helical transmembrane segments spans residues 39-59 (FWLL…YFDW), 94-114 (SLYP…GFLY), 117-137 (IGPK…WVFL), 148-168 (FLSF…ILTI), 177-197 (TFIL…PATL), and 217-237 (IFLI…LMPF). 3 N-linked (GlcNAc...) asparagine glycosylation sites follow: asparagine 298, asparagine 325, and asparagine 346. A helical transmembrane segment spans residues 365–385 (LFFKVLLSYPSICIIVYFILF). Asparagine 386 carries an N-linked (GlcNAc...) asparagine glycan. Transmembrane regions (helical) follow at residues 405–425 (SIIN…IIFG), 433–453 (SAII…TALI), 461–481 (VSAF…YCFI), 488–508 (VVFG…SLLC), and 528–548 (VVLL…VLYF).

This sequence belongs to the SLC43A transporter (TC 2.A.1.44) family.

It is found in the membrane. The enzyme catalyses L-arginine(in) = L-arginine(out). Sodium-independent cationic amino acid transporter. Transports L-arginine, L-lysine, L-histidine and L-ornithine. This Plasmodium vivax (strain Salvador I) protein is Cationic amino acid transporter 8.